Reading from the N-terminus, the 330-residue chain is Ketol-acid reductoisomerase (NADP(+)) (330 aa).

The KARI N-terminal Rossmann domain occupies 2–182 (VKVYYDADAN…GCTKAGVFET (181 aa)). NADP(+) is bound by residues 25–28 (YGSQ), Arg48, Ser51, and 83–86 (DEIQ). His108 is an active-site residue. Gly134 contacts NADP(+). One can recognise a KARI C-terminal knotted domain in the interval 183 to 328 (SFREETETDL…ARLREMMPWL (146 aa)). Asp191, Glu195, Glu227, and Glu231 together coordinate Mg(2+). Ser252 serves as a coordination point for substrate.

The protein belongs to the ketol-acid reductoisomerase family. Mg(2+) serves as cofactor.

It catalyses the reaction (2R)-2,3-dihydroxy-3-methylbutanoate + NADP(+) = (2S)-2-acetolactate + NADPH + H(+). The catalysed reaction is (2R,3R)-2,3-dihydroxy-3-methylpentanoate + NADP(+) = (S)-2-ethyl-2-hydroxy-3-oxobutanoate + NADPH + H(+). It participates in amino-acid biosynthesis; L-isoleucine biosynthesis; L-isoleucine from 2-oxobutanoate: step 2/4. The protein operates within amino-acid biosynthesis; L-valine biosynthesis; L-valine from pyruvate: step 2/4. Functionally, involved in the biosynthesis of branched-chain amino acids (BCAA). Catalyzes an alkyl-migration followed by a ketol-acid reduction of (S)-2-acetolactate (S2AL) to yield (R)-2,3-dihydroxy-isovalerate. In the isomerase reaction, S2AL is rearranged via a Mg-dependent methyl migration to produce 3-hydroxy-3-methyl-2-ketobutyrate (HMKB). In the reductase reaction, this 2-ketoacid undergoes a metal-dependent reduction by NADPH to yield (R)-2,3-dihydroxy-isovalerate. This Desulforamulus reducens (strain ATCC BAA-1160 / DSM 100696 / MI-1) (Desulfotomaculum reducens) protein is Ketol-acid reductoisomerase (NADP(+)).